A 109-amino-acid polypeptide reads, in one-letter code: N-cym protein (109 aa).

As to quaternary structure, interacts with MYCN and GSK3B. Expressed in the neuronal cells of the cerebrum and cerebellum, spermatocytes of the testis, pancreatic cells and also the heart. Expressed in both primary and metastatic neuroblastomas and in thyroid tumors (at protein level). Expression is associated with poor prognosis in neuroblastoma. Expressed in the fetal brain, lung, liver and kidney at varying low levels.

Its subcellular location is the cytoplasm. The protein localises to the nucleus. In terms of biological role, regulates stability of MYCN in neuroblastoma cells by inhibiting GSK3B-mediated MYCN phosphorylation. Inhibits GSK3B activity by promoting its phosphorylation at 'Ser-9'. This is N-cym protein (MYCNOS) from Homo sapiens (Human).